We begin with the raw amino-acid sequence, 315 residues long: Olfactory receptor 3A2 (315 aa).

The Extracellular segment spans residues M1–V29. Residue N8 is glycosylated (N-linked (GlcNAc...) asparagine). The helical transmembrane segment at V30–I52 threads the bilayer. At L53–A60 the chain is on the cytoplasmic side. A helical transmembrane segment spans residues P61–P82. The Extracellular segment spans residues A83–Q103. An intrachain disulfide couples C100 to C192. Residues L104–Y123 traverse the membrane as a helical segment. At D124–V143 the chain is on the cytoplasmic side. Residues Q144–T161 form a helical membrane-spanning segment. Residues H162 to E199 lie on the Extracellular side of the membrane. The chain crosses the membrane as a helical span at residues L200 to H223. Residues V224–A240 lie on the Cytoplasmic side of the membrane. The helical transmembrane segment at F241–R264 threads the bilayer. Residues L265–K275 lie on the Extracellular side of the membrane. The chain crosses the membrane as a helical span at residues G276–L295. Residues R296–T315 lie on the Cytoplasmic side of the membrane.

Belongs to the G-protein coupled receptor 1 family.

It localises to the cell membrane. Its function is as follows. Odorant receptor. This is Olfactory receptor 3A2 (OR3A2) from Pan troglodytes (Chimpanzee).